A 238-amino-acid chain; its full sequence is 15,16-dihydrobiliverdin:ferredoxin oxidoreductase (238 aa).

Belongs to the HY2 family.

The catalysed reaction is 15,16-dihydrobiliverdin + oxidized 2[4Fe-4S]-[ferredoxin] = biliverdin IXalpha + reduced 2[4Fe-4S]-[ferredoxin] + 2 H(+). Catalyzes the two-electron reduction of biliverdin IX-alpha at the C15 methine bridge. The polypeptide is 15,16-dihydrobiliverdin:ferredoxin oxidoreductase (Prochlorococcus marinus (strain NATL1A)).